A 164-amino-acid chain; its full sequence is Putative pre-16S rRNA nuclease (164 aa).

This sequence belongs to the YqgF nuclease family.

It is found in the cytoplasm. Functionally, could be a nuclease involved in processing of the 5'-end of pre-16S rRNA. The sequence is that of Putative pre-16S rRNA nuclease from Synechococcus sp. (strain CC9902).